The sequence spans 676 residues: Pre-mRNA-splicing factor CLF1 (676 aa).

HAT repeat units follow at residues 46-78, 80-112, 114-146, 148-179, 181-212, 215-255, 257-291, 301-333, 336-369, 379-415, 417-449, 451-483, 485-519, 521-553, 576-614, and 620-652; these read EYQG…WELE, REFA…CELK, KNIN…TEET, GNIA…MEKR, REFD…FEME, NRDT…FETR, REYE…FEKQ, VVLT…LGQE, LEAD…LWIK, KEVE…FEIR, GNLP…LEAK, REFD…LEQM, GDEE…FEAE, ENYD…FEVT, EAKA…FEEE, and SKAD…YVFP. The span at 616–628 shows a compositional bias: basic and acidic residues; sequence GDDKSKADLDKRK. A disordered region spans residues 616-636; sequence GDDKSKADLDKRKPTPVKKKR.

It belongs to the crooked-neck family. As to quaternary structure, associated with the spliceosome.

It localises to the nucleus. In terms of biological role, involved in pre-mRNA splicing and cell cycle progression. Required for the spliceosome assembly and initiation of the DNA replication. This chain is Pre-mRNA-splicing factor CLF1 (CLF1), found in Yarrowia lipolytica (strain CLIB 122 / E 150) (Yeast).